Consider the following 316-residue polypeptide: Transaldolase B (316 aa).

Residue K131 is the Schiff-base intermediate with substrate of the active site.

Belongs to the transaldolase family. Type 1 subfamily. In terms of assembly, homodimer.

Its subcellular location is the cytoplasm. It catalyses the reaction D-sedoheptulose 7-phosphate + D-glyceraldehyde 3-phosphate = D-erythrose 4-phosphate + beta-D-fructose 6-phosphate. The protein operates within carbohydrate degradation; pentose phosphate pathway; D-glyceraldehyde 3-phosphate and beta-D-fructose 6-phosphate from D-ribose 5-phosphate and D-xylulose 5-phosphate (non-oxidative stage): step 2/3. Transaldolase is important for the balance of metabolites in the pentose-phosphate pathway. The protein is Transaldolase B (talB) of Pasteurella multocida (strain Pm70).